The sequence spans 213 residues: 3-isopropylmalate dehydratase small subunit (213 aa).

The protein belongs to the LeuD family. LeuD type 1 subfamily. In terms of assembly, heterodimer of LeuC and LeuD.

It carries out the reaction (2R,3S)-3-isopropylmalate = (2S)-2-isopropylmalate. The protein operates within amino-acid biosynthesis; L-leucine biosynthesis; L-leucine from 3-methyl-2-oxobutanoate: step 2/4. Its function is as follows. Catalyzes the isomerization between 2-isopropylmalate and 3-isopropylmalate, via the formation of 2-isopropylmaleate. In Aromatoleum aromaticum (strain DSM 19018 / LMG 30748 / EbN1) (Azoarcus sp. (strain EbN1)), this protein is 3-isopropylmalate dehydratase small subunit.